A 501-amino-acid chain; its full sequence is Probable Xaa-Pro aminopeptidase pepP (501 aa).

Positions Met-1–Arg-25 are disordered. Residues Ser-12–Arg-25 are compositionally biased toward polar residues. Mn(2+) contacts are provided by Asp-298, Asp-309, Glu-432, and Glu-472.

It belongs to the peptidase M24B family. The cofactor is Mn(2+).

It carries out the reaction Release of any N-terminal amino acid, including proline, that is linked to proline, even from a dipeptide or tripeptide.. In terms of biological role, catalyzes the removal of a penultimate prolyl residue from the N-termini of peptides. In Metarhizium acridum (strain CQMa 102), this protein is Probable Xaa-Pro aminopeptidase pepP (pepP).